A 411-amino-acid polypeptide reads, in one-letter code: MFNLPEVATRLSQNVELLVDEIDKTGSQPNCGNPTLLGPKGLAARDEIILAAEKLLQQGRGPGPSLLSLLESAVDIGTIQTLIRLEVPDQVPPTGSIPYDALVKKLKTPVAPELLQRLIRFTRLAGFLDEDEEGAVKHSPMSAIFVSDPDSAGQARFMADFGIRPCSFIYESIKLDPSGEATRQGPLALMAREPGAREGPTFFEVLEKDPVNRNRWHDGMAVHNDSMVRHVADAYDWDTVKSLVDIGGSEGHVAAVIANAFAHIQITVQDRPEIIEKARQRVDRHRNITFEEHDFFTPQPRIADAYFLRLILHDWNDADCTRIVRQISSALRPGARLLIMDAVLPEPGEGSLQSERQLRRSDIGMYTLFSAKERSLVQMRRLVEDCDDRLRFEKLYTPPGSHASMLSWICE.

An S-adenosyl-L-methionine-binding site is contributed by Asp-270. Residue His-313 is the Proton acceptor of the active site.

Belongs to the class I-like SAM-binding methyltransferase superfamily. Cation-independent O-methyltransferase family. Homodimer.

It catalyses the reaction 6-hydroxytryprostatin B + S-adenosyl-L-methionine = tryprostatin A + S-adenosyl-L-homocysteine + H(+). It participates in alkaloid biosynthesis. Its function is as follows. 6-hydroxytryprostatin B O-methyltransferase; part of the gene cluster that mediates the biosynthesis of fumitremorgins, indole alkaloids that carry not only intriguing chemical structures, but also interesting biological and pharmacological activities. The biosynthesis of fumitremorgin-type alkaloids begins by condensation of the two amino acids L-tryptophan and L-proline to brevianamide F, catalyzed by the non-ribosomal peptide synthetase ftmPS/ftmA. Brevianamide F is then prenylated by the prenyltransferase ftmPT1/ftmB in the presence of dimethylallyl diphosphate, resulting in the formation of tryprostatin B. The three cytochrome P450 monooxygenases, ftmP450-1/ftmC, ftmP450-2/ftmE and ftmP450-3/FtmG, are responsible for the conversion of tryprostatin B to 6-hydroxytryprostatin B, tryprostatin A to fumitremorgin C and fumitremorgin C to 12,13-dihydroxyfumitremorgin C, respectively. The putative methyltransferase ftmMT/ftmD is expected for the conversion of 6-hydroxytryprostatin B to tryprostatin A. FtmPT2/FtmH catalyzes the prenylation of 12,13-dihydroxyfumitre-morgin C in the presence of dimethylallyl diphosphate, resulting in the formation of fumitremorgin B. Fumitremorgin B is further converted to verruculogen by ftmOx1/ftmF via the insertion of an endoperoxide bond between the two prenyl moieties. Finally, verruculogen is further converted to fumitremorgin A by the verruculogen prenyltransferase ftmPT3. In Neosartorya fischeri (strain ATCC 1020 / DSM 3700 / CBS 544.65 / FGSC A1164 / JCM 1740 / NRRL 181 / WB 181) (Aspergillus fischerianus), this protein is 6-hydroxytryprostatin B O-methyltransferase.